A 237-amino-acid polypeptide reads, in one-letter code: Photosystem I-associated linker protein CpcL (237 aa).

The PBS-linker domain occupies 11 to 191 (TTQNQRVQSF…DYRDRAGIVR (181 aa)). A helical transmembrane segment spans residues 208–228 (GVAILGVLLAISAGMTFLFVL).

Belongs to the phycobilisome linker protein family. As to quaternary structure, part of a specialized phycobilisome (PBS), a structure that is usually composed of two distinct substructures: a core complex and a number of rods radiating from the core. This protein is part of a core-less PBS rod (called CpcL-PBS). In vegetative cells associated substoichiometrically with photosystem I and phycobiliproteins phycocyanin as well as phycoerythrocyanin in the thylakoid membrane, not found in conventional, hemidiscoidal phycobilisomes.

It localises to the cellular thylakoid membrane. Functionally, rod linker protein, associated with phycocyanin (PC). Linker polypeptides determine the state of aggregation and the location of the disk-shaped phycobiliprotein units within the phycobilisome (PBS) and modulate their spectroscopic properties in order to mediate a directed and optimal energy transfer. Forms a supercomplex with tetrameric photosystem I (PSI) and PC that allows efficient energy transfer from PC to PSI. This protein seems to be in the middle of the PC hexameric rod and may anchor the PC rods at the periphery of PSI tetramers. May be involved in the cyclic electron transport around PSI that provides ATP needed for N(2) fixation in heterocysts. This Nostoc sp. (strain PCC 7120 / SAG 25.82 / UTEX 2576) protein is Photosystem I-associated linker protein CpcL.